The following is a 109-amino-acid chain: MNPALGNQTDVAGLFLANSSEALERAMRCCTQASVVTDDGFAEGGPDERSLYIMRVVQIAVMCVLSLTVVFGIFFLGCNLLIKSEGMINFLVKDRRPSKEVEAVVVGPY.

Residues N7 and N18 are each glycosylated (N-linked (GlcNAc...) asparagine). The chain crosses the membrane as a helical span at residues 56-76 (VVQIAVMCVLSLTVVFGIFFL). Position 98 is a phosphoserine (S98).

The protein belongs to the reprimo family.

It is found in the cytoplasm. The protein localises to the membrane. In terms of biological role, may be involved in the regulation of p53-dependent G2 arrest of the cell cycle. Seems to induce cell cycle arrest by inhibiting CDK1 activity and nuclear translocation of the CDC2 cyclin B1 complex. In Bos taurus (Bovine), this protein is Protein reprimo (RPRM).